A 500-amino-acid polypeptide reads, in one-letter code: NADH-quinone oxidoreductase subunit N (500 aa).

A run of 14 helical transmembrane segments spans residues 6 to 26, 40 to 60, 69 to 89, 106 to 125, 129 to 151, 164 to 184, 207 to 227, 239 to 259, 276 to 296, 302 to 322, 337 to 357, 380 to 400, 417 to 437, and 464 to 484; these read SWIAVYPELVLLVMACLIALV, ALTLLTLGAVAVMEASYALGG, MVVVDPMGSWLKCFSSIALMI, GGEFFTLSLFALLGMFVMIS, FLVLYMGLELMTLCSYALVALRR, FVLGALASGFLLYGLSMLYGA, LVFGLVFIVAGLAFKLGAVPF, PTAVTLIIGGAPQLAAFAMTI, MLALMAIGSLVIGNLAAVAQT, LAFSTISQMGFLLLGLLAGVV, MFYALTYVLTTLAAFGIILLL, YAGVMAMSMFSLAGLPPLVGF, SYLVLAVFAVFMSLIGAFYYL, and IVLAINGALLLVLGIAPSSLM.

It belongs to the complex I subunit 2 family. In terms of assembly, NDH-1 is composed of 14 different subunits. Subunits NuoA, H, J, K, L, M, N constitute the membrane sector of the complex.

The protein resides in the cell inner membrane. It carries out the reaction a quinone + NADH + 5 H(+)(in) = a quinol + NAD(+) + 4 H(+)(out). In terms of biological role, NDH-1 shuttles electrons from NADH, via FMN and iron-sulfur (Fe-S) centers, to quinones in the respiratory chain. The immediate electron acceptor for the enzyme in this species is believed to be ubiquinone. Couples the redox reaction to proton translocation (for every two electrons transferred, four hydrogen ions are translocated across the cytoplasmic membrane), and thus conserves the redox energy in a proton gradient. The sequence is that of NADH-quinone oxidoreductase subunit N from Polaromonas naphthalenivorans (strain CJ2).